We begin with the raw amino-acid sequence, 319 residues long: Cytochrome c biogenesis protein CcsA (319 aa).

5 consecutive transmembrane segments (helical) span residues 14 to 34, 46 to 66, 74 to 94, 97 to 117, and 142 to 162; these read AFAV…FPQW, AIAN…GGYF, SLFF…SISG, LVGV…ALSL, and VMML…ALLV. The disordered stretch occupies residues 175–201; that stretch reads SVGTGSFRSRRPEPSLEASTGNGGTTV. A compositionally biased stretch (polar residues) spans 191 to 201; that stretch reads EASTGNGGTTV. The next 3 helical transmembrane spans lie at 227-247, 254-274, and 288-308; these read MIGL…VWAN, WSWD…AAYL, and AILA…VNLL.

Belongs to the CcmF/CycK/Ccl1/NrfE/CcsA family. As to quaternary structure, may interact with ccs1.

The protein localises to the cellular thylakoid membrane. Functionally, required during biogenesis of c-type cytochromes (cytochrome c6 and cytochrome f) at the step of heme attachment. The protein is Cytochrome c biogenesis protein CcsA of Thermosynechococcus vestitus (strain NIES-2133 / IAM M-273 / BP-1).